Consider the following 580-residue polypeptide: 2-succinyl-5-enolpyruvyl-6-hydroxy-3-cyclohexene-1-carboxylate synthase (580 aa).

This sequence belongs to the TPP enzyme family. MenD subfamily. Homodimer. Mg(2+) serves as cofactor. The cofactor is Mn(2+). Requires thiamine diphosphate as cofactor.

The enzyme catalyses isochorismate + 2-oxoglutarate + H(+) = 5-enolpyruvoyl-6-hydroxy-2-succinyl-cyclohex-3-ene-1-carboxylate + CO2. The protein operates within quinol/quinone metabolism; 1,4-dihydroxy-2-naphthoate biosynthesis; 1,4-dihydroxy-2-naphthoate from chorismate: step 2/7. It functions in the pathway quinol/quinone metabolism; menaquinone biosynthesis. Functionally, catalyzes the thiamine diphosphate-dependent decarboxylation of 2-oxoglutarate and the subsequent addition of the resulting succinic semialdehyde-thiamine pyrophosphate anion to isochorismate to yield 2-succinyl-5-enolpyruvyl-6-hydroxy-3-cyclohexene-1-carboxylate (SEPHCHC). The chain is 2-succinyl-5-enolpyruvyl-6-hydroxy-3-cyclohexene-1-carboxylate synthase from Listeria welshimeri serovar 6b (strain ATCC 35897 / DSM 20650 / CCUG 15529 / CIP 8149 / NCTC 11857 / SLCC 5334 / V8).